A 348-amino-acid polypeptide reads, in one-letter code: Protein RecA (348 aa).

66-73 (GPESSGKT) serves as a coordination point for ATP.

This sequence belongs to the RecA family.

The protein localises to the cytoplasm. In terms of biological role, can catalyze the hydrolysis of ATP in the presence of single-stranded DNA, the ATP-dependent uptake of single-stranded DNA by duplex DNA, and the ATP-dependent hybridization of homologous single-stranded DNAs. It interacts with LexA causing its activation and leading to its autocatalytic cleavage. The polypeptide is Protein RecA (Legionella pneumophila).